A 511-amino-acid chain; its full sequence is Probable pectinesterase/pectinesterase inhibitor 17 (511 aa).

An N-terminal signal peptide occupies residues 1 to 23 (MMAFRAYIINFVILCILVASTVS). Positions 24–171 (GYNQKDVKAW…SNLLCNTLAI (148 aa)) are pectinesterase inhibitor 17. Residues Asn112 and Asn160 are each glycosylated (N-linked (GlcNAc...) asparagine). A pectinesterase 17 region spans residues 237 to 414 (VKQGVYSENL…LRPVLGSTKT (178 aa)). The substrate site is built by Thr277 and Gln307. Asp330 functions as the Proton donor; for pectinesterase activity in the catalytic mechanism. A disulfide bridge links Cys344 with Cys364. The active-site Nucleophile; for pectinesterase activity is Asp351. Substrate contacts are provided by Arg418 and Trp420.

This sequence in the N-terminal section; belongs to the PMEI family. In the C-terminal section; belongs to the pectinesterase family. Expressed in siliques.

The protein localises to the secreted. The protein resides in the cell wall. The enzyme catalyses [(1-&gt;4)-alpha-D-galacturonosyl methyl ester](n) + n H2O = [(1-&gt;4)-alpha-D-galacturonosyl](n) + n methanol + n H(+). The protein operates within glycan metabolism; pectin degradation; 2-dehydro-3-deoxy-D-gluconate from pectin: step 1/5. In terms of biological role, acts in the modification of cell walls via demethylesterification of cell wall pectin. In Arabidopsis thaliana (Mouse-ear cress), this protein is Probable pectinesterase/pectinesterase inhibitor 17 (PME17).